The chain runs to 686 residues: Amyloid-beta-like protein (686 aa).

Positions 1–21 are cleaved as a signal peptide; the sequence is MTVGKLMIGLLIPILVATVYA. Residues 22–621 are Extracellular-facing; it reads EGSPAGSKRH…VERSASSVFQ (600 aa). The segment at 32–125 is GFLD subdomain; sequence EKFIPMVAFS…PYHCIDGEFH (94 aa). The E1 domain maps to 32–197; the sequence is EKFIPMVAFS…TGVEFVCCPN (166 aa). Cystine bridges form between cysteine 42–cysteine 65, cysteine 76–cysteine 119, cysteine 101–cysteine 108, cysteine 135–cysteine 195, cysteine 146–cysteine 182, and cysteine 160–cysteine 194. Residue asparagine 84 is glycosylated (N-linked (GlcNAc...) asparagine). Residues 133 to 197 are cuBD subdomain; that stretch reads HDCQFSHVNS…TGVEFVCCPN (65 aa). The N-linked (GlcNAc...) asparagine glycan is linked to asparagine 201. Residues 201-245 are disordered; it reads NKTDVQKTKEDEDDDDDEDDAYEDDYSEESDEKDEEEPSSQDPYF. Over residues 211-239 the composition is skewed to acidic residues; that stretch reads DEDDDDDEDDAYEDDYSEESDEKDEEEPS. In terms of domain architecture, E2 spans 240–440; the sequence is SQDPYFKIAN…KYVRPIAVTY (201 aa). Asparagine 249 carries N-linked (GlcNAc...) asparagine glycosylation. Heparin contacts are provided by residues 252-255 and histidine 382; that span reads NEHD. Residue asparagine 417 is glycosylated (N-linked (GlcNAc...) asparagine). Disordered stretches follow at residues 479 to 526 and 550 to 585; these read PTTT…DMKK and KLVE…NIKE. Acidic residues predominate over residues 500–516; it reads SDSEEEADEYYEDEDDE. Positions 517–526 are enriched in basic and acidic residues; the sequence is QVKKTPDMKK. Acidic residues predominate over residues 558–567; that stretch reads TDDEDDDEDS. Residues 622 to 642 traverse the membrane as a helical segment; that stretch reads PYVLASAMFITAICIIAFAIT. Residues 643–686 lie on the Cytoplasmic side of the membrane; the sequence is NARRRRAMRGFIEVDVYTPEERHVAGMQVNGYENPTYSFFDSKA. The YENPXY motif signature appears at 674 to 679; it reads YENPTY.

Belongs to the APP family. In terms of assembly, interacts (via cytoplasmic domain) with feh-1 (via PID 2 domain). Post-translationally, extracellular region is proteolytically cleaved. In terms of tissue distribution, expressed in the head, pharynx, spermatheca, uterus, vulva, tail and ventral neurons. Specifically expressed in nerve ring interneurons, the ventral cord, socket and amphids in the head, with strong expression in junctional cells, including the pharyngeal intestinal valve and uterine seam junction, and the excretory cell and weak expression in epidermal epithelial cells, including hyp7 cells, vulval cells, rectal valve cells, pharyngeal arcade cells and the tail hypodermis.

It is found in the membrane. The protein resides in the early endosome. Required for normal developmental progression throughout all life stages. Specifically required for the molt stage during all larval transitions and morphogenesis. Acts with heterochronic genes, including members of the let-7 family, to regulate larval stage to adult transition. Acts synergistically with acn-1 in let-7 regulated postembryonic cell division of hypodermal seam cells. Acts in multiple pathways to influence daf-12 and daf-16 activity to in turn regulate physiological and reproductive processes such as body size and egg-laying. May play a role in neurotransmission. This chain is Amyloid-beta-like protein, found in Caenorhabditis elegans.